Reading from the N-terminus, the 259-residue chain is Succinate dehydrogenase iron-sulfur subunit (259 aa).

A 2Fe-2S ferredoxin-type domain is found at 28-119 (RRFNIYRWDP…DVNIYPLPHM (92 aa)). [2Fe-2S] cluster-binding residues include C80, C85, and C100. Positions 160–190 (DRKKLDGLYECVMCASCSTACPSYWWNGDRY) constitute a 4Fe-4S ferredoxin-type domain. [4Fe-4S] cluster contacts are provided by C170, C173, and C176. A [3Fe-4S] cluster-binding site is contributed by C180. W185 serves as a coordination point for a ubiquinone. 2 residues coordinate [3Fe-4S] cluster: C227 and C233. C237 is a [4Fe-4S] cluster binding site.

Belongs to the succinate dehydrogenase/fumarate reductase iron-sulfur protein family. As to quaternary structure, part of an enzyme complex containing four subunits: a flavoprotein, an iron-sulfur, cytochrome b-556, and a hydrophobic anchor protein. It depends on [2Fe-2S] cluster as a cofactor. [3Fe-4S] cluster serves as cofactor. [4Fe-4S] cluster is required as a cofactor.

It carries out the reaction a quinone + succinate = fumarate + a quinol. It functions in the pathway carbohydrate metabolism; tricarboxylic acid cycle; fumarate from succinate (bacterial route): step 1/1. This is Succinate dehydrogenase iron-sulfur subunit (sdhB) from Paracoccus denitrificans.